The sequence spans 365 residues: Flagellar P-ring protein (365 aa).

An N-terminal signal peptide occupies residues 1–19; sequence MIKFLSALILLLVTTAAQA.

Belongs to the FlgI family. The basal body constitutes a major portion of the flagellar organelle and consists of four rings (L,P,S, and M) mounted on a central rod.

The protein localises to the periplasm. It is found in the bacterial flagellum basal body. Assembles around the rod to form the L-ring and probably protects the motor/basal body from shearing forces during rotation. The sequence is that of Flagellar P-ring protein from Shigella flexneri serotype 5b (strain 8401).